The sequence spans 166 residues: Probable chemoreceptor glutamine deamidase CheD (166 aa).

It belongs to the CheD family.

The catalysed reaction is L-glutaminyl-[protein] + H2O = L-glutamyl-[protein] + NH4(+). In terms of biological role, probably deamidates glutamine residues to glutamate on methyl-accepting chemotaxis receptors (MCPs), playing an important role in chemotaxis. This Clostridium acetobutylicum (strain ATCC 824 / DSM 792 / JCM 1419 / IAM 19013 / LMG 5710 / NBRC 13948 / NRRL B-527 / VKM B-1787 / 2291 / W) protein is Probable chemoreceptor glutamine deamidase CheD.